The chain runs to 880 residues: Leucine-rich repeat-containing protein 66 (880 aa).

The chain crosses the membrane as a helical span at residues 4 to 24 (LYFRVITIVIGLYFTGIMTNA). The N-linked (GlcNAc...) asparagine glycan is linked to Asn-45. LRR repeat units follow at residues 86–107 (KIKHLDLSNNLISKITLSPFAY), 110–130 (ALEVLNLSNNAIHSLSLDLLS), 149–171 (LLKVLILQRNKLSDTPKGLWKLK), 172–193 (SLQSLDLSFNGILQIGWSDFHN), 196–217 (QLENLCLKSNKIFKIPPQAFKD), and 220–241 (KLQVIDLSNNALITILPMMIIA). Asn-115 is a glycosylation site (N-linked (GlcNAc...) asparagine). The tract at residues 319–368 (SKAERPQGGRHTGISTLGKKAKAGSGLRKKQRRLPRSVRSTRDVQAAGKK) is disordered. The span at 337–354 (KKAKAGSGLRKKQRRLPR) shows a compositional bias: basic residues. Residues 376–396 (ALAVCLSVFITFLVAFSLGAF) form a helical membrane-spanning segment. 2 disordered regions span residues 463–504 (PHPH…NDGA) and 679–746 (VTPA…SKDN). Residues 483–493 (GSSQSPGQCGD) show a composition bias toward polar residues. Acidic residues predominate over residues 697 to 707 (CELESDCDSDE). Positions 709-720 (SLFTLSSISSES) are enriched in low complexity. Ser-723 bears the Phosphoserine mark. A compositionally biased stretch (polar residues) spans 737 to 746 (DESSGASKDN). N-linked (GlcNAc...) asparagine glycosylation occurs at Asn-746. Ser-752 carries the phosphoserine modification. An N-linked (GlcNAc...) asparagine glycan is attached at Asn-756. Disordered stretches follow at residues 764-816 (GKCK…PLGD) and 855-880 (TPPCSAEVPSDPDKAAFHERDSDILK). Basic and acidic residues-rich tracts occupy residues 788-800 (THLENASDTDRSE) and 865-880 (DPDKAAFHERDSDILK).

The protein localises to the membrane. This chain is Leucine-rich repeat-containing protein 66 (LRRC66), found in Homo sapiens (Human).